We begin with the raw amino-acid sequence, 230 residues long: Type II restriction enzyme MjaV (230 aa).

The catalysed reaction is Endonucleolytic cleavage of DNA to give specific double-stranded fragments with terminal 5'-phosphates.. Functionally, a P subtype restriction enzyme that recognizes the double-stranded sequence 5'-GTAC-3'; the cleavage site is unknown. This chain is Type II restriction enzyme MjaV (mjaVR), found in Methanocaldococcus jannaschii (strain ATCC 43067 / DSM 2661 / JAL-1 / JCM 10045 / NBRC 100440) (Methanococcus jannaschii).